The primary structure comprises 94 residues: Large ribosomal subunit protein uL23 (94 aa).

The protein belongs to the universal ribosomal protein uL23 family. Part of the 50S ribosomal subunit. Contacts protein L29, and trigger factor when it is bound to the ribosome.

Functionally, one of the early assembly proteins it binds 23S rRNA. One of the proteins that surrounds the polypeptide exit tunnel on the outside of the ribosome. Forms the main docking site for trigger factor binding to the ribosome. The sequence is that of Large ribosomal subunit protein uL23 from Geobacter sulfurreducens (strain ATCC 51573 / DSM 12127 / PCA).